We begin with the raw amino-acid sequence, 1113 residues long: StAR-related lipid transfer protein 13 (1113 aa).

The residue at position 1 (Met1) is an N-acetylmethionine. Residues 55 to 122 (QQEIEAKEAC…LNKCASMKLD (68 aa)) enclose the SAM domain. Disordered stretches follow at residues 162–254 (LLPR…PTRA) and 307–346 (PNGDLQNSPPPACRKGLPCSGKSSGESSPSEHSSSGVSTP). A compositionally biased stretch (polar residues) spans 177–188 (MRNTTSSESVLT). Composition is skewed to low complexity over residues 197 to 213 (SIHSESSGGSDSRSQPG) and 326 to 344 (SGKSSGESSPSEHSSSGVS). At Ser411 the chain carries Phosphoserine. Residues 536–549 (FEGNSVSEGRTTPS) are compositionally biased toward polar residues. Residues 536–580 (FEGNSVSEGRTTPSDVERDVTSLNESEPPGVRDRRDSGVGASLTR) form a disordered region. The Rho-GAP domain maps to 663 to 868 (VPLIVHVQRT…HMIMECDRLF (206 aa)). In terms of domain architecture, START spans 899–1107 (LEESGATFHT…RNSFQPLIAE (209 aa)).

As to quaternary structure, homodimer. Interacts with TAX1BP1. In terms of tissue distribution, ubiquitously expressed. Underexpressed in hepatocellular carcinoma cells and some breast cancer cell lines.

It is found in the cytoplasm. The protein resides in the membrane. It localises to the mitochondrion membrane. The protein localises to the lipid droplet. In terms of biological role, GTPase-activating protein for RhoA, and perhaps for Cdc42. May be involved in regulation of cytoskeletal reorganization, cell proliferation and cell motility. Acts a tumor suppressor in hepatocellular carcinoma cells. The polypeptide is StAR-related lipid transfer protein 13 (STARD13) (Homo sapiens (Human)).